We begin with the raw amino-acid sequence, 89 residues long: Small ribosomal subunit protein bS20 (89 aa).

The segment at 1-26 (MANSPQAKKRARQNEKNRKHNASLRS) is disordered. Positions 7–22 (AKKRARQNEKNRKHNA) are enriched in basic residues.

It belongs to the bacterial ribosomal protein bS20 family.

In terms of biological role, binds directly to 16S ribosomal RNA. The protein is Small ribosomal subunit protein bS20 of Marinobacter nauticus (strain ATCC 700491 / DSM 11845 / VT8) (Marinobacter aquaeolei).